Reading from the N-terminus, the 331-residue chain is Benzylsuccinate synthase activating enzyme (331 aa).

The 301-residue stretch at 15-315 (QDGPGIRTTI…VTIGGIVGIA (301 aa)) folds into the Radical SAM core domain. Residues cysteine 29, cysteine 33, cysteine 36, cysteine 55, cysteine 58, cysteine 61, cysteine 65, cysteine 89, cysteine 92, cysteine 95, and cysteine 99 each contribute to the [4Fe-4S] cluster site. 35–37 (WCH) contacts S-adenosyl-L-methionine. 4Fe-4S ferredoxin-type domains are found at residues 46–75 (QEFYFYPDRCVGCGRCVAVCPAETSRLVRN) and 80–109 (TIVQIDRTNCQRCMRCVAACLTEARAIVGQ). Residues glycine 139, 189 to 191 (DLK), and histidine 263 each bind S-adenosyl-L-methionine.

The protein belongs to the organic radical-activating enzymes family. It depends on [4Fe-4S] cluster as a cofactor.

The enzyme catalyses glycyl-[protein] + reduced [flavodoxin] + S-adenosyl-L-methionine = glycin-2-yl radical-[protein] + semiquinone [flavodoxin] + 5'-deoxyadenosine + L-methionine + H(+). It functions in the pathway xenobiotic degradation; toluene degradation [regulation]. Its function is as follows. Activation of benzylsuccinate synthase under anaerobic conditions by generation of an organic free radical, using S-adenosylmethionine and reduced flavodoxin as cosubstrates to produce 5'-deoxy-adenosine. This is Benzylsuccinate synthase activating enzyme (bssD) from Thauera aromatica.